We begin with the raw amino-acid sequence, 228 residues long: Glyceraldehyde 3-phosphate phosphatase (228 aa).

The protein belongs to the HAD-like hydrolase superfamily. It depends on Mg(2+) as a cofactor.

In terms of biological role, catalyzes the dephosphorylation of D,L-glyceraldehyde 3-phosphate in vitro. The protein is Glyceraldehyde 3-phosphate phosphatase of Methanocaldococcus jannaschii (strain ATCC 43067 / DSM 2661 / JAL-1 / JCM 10045 / NBRC 100440) (Methanococcus jannaschii).